Reading from the N-terminus, the 107-residue chain is Nucleoid-associated protein HNE_0371 (107 aa).

It belongs to the YbaB/EbfC family. As to quaternary structure, homodimer.

The protein resides in the cytoplasm. It is found in the nucleoid. Its function is as follows. Binds to DNA and alters its conformation. May be involved in regulation of gene expression, nucleoid organization and DNA protection. The polypeptide is Nucleoid-associated protein HNE_0371 (Hyphomonas neptunium (strain ATCC 15444)).